We begin with the raw amino-acid sequence, 272 residues long: N-acetylmuramoyl-L-alanine amidase CwlA (272 aa).

In terms of domain architecture, N-acetylmuramoyl-L-alanine amidase spans 24–142; sequence KAEYITIHNT…QDWNGKYCPH (119 aa).

This sequence belongs to the N-acetylmuramoyl-L-alanine amidase 2 family.

It catalyses the reaction Hydrolyzes the link between N-acetylmuramoyl residues and L-amino acid residues in certain cell-wall glycopeptides.. Autolysins are involved in some important biological processes such as cell separation, cell-wall turnover, competence for genetic transformation, formation of the flagella and sporulation. This chain is N-acetylmuramoyl-L-alanine amidase CwlA (cwlA), found in Bacillus subtilis (strain 168).